We begin with the raw amino-acid sequence, 78 residues long: Exodeoxyribonuclease 7 small subunit (78 aa).

The protein belongs to the XseB family. In terms of assembly, heterooligomer composed of large and small subunits.

Its subcellular location is the cytoplasm. The catalysed reaction is Exonucleolytic cleavage in either 5'- to 3'- or 3'- to 5'-direction to yield nucleoside 5'-phosphates.. Bidirectionally degrades single-stranded DNA into large acid-insoluble oligonucleotides, which are then degraded further into small acid-soluble oligonucleotides. This chain is Exodeoxyribonuclease 7 small subunit, found in Finegoldia magna (strain ATCC 29328 / DSM 20472 / WAL 2508) (Peptostreptococcus magnus).